A 216-amino-acid polypeptide reads, in one-letter code: Small ribosomal subunit protein uS3c (216 aa).

The 76-residue stretch at 43–118 (IKNYLQKNMR…KLNIAITRIT (76 aa)) folds into the KH type-2 domain.

It belongs to the universal ribosomal protein uS3 family. In terms of assembly, part of the 30S ribosomal subunit.

Its subcellular location is the plastid. The protein localises to the chloroplast. In Eucalyptus globulus subsp. globulus (Tasmanian blue gum), this protein is Small ribosomal subunit protein uS3c (rps3).